The chain runs to 273 residues: NADPH-dependent 7-cyano-7-deazaguanine reductase (273 aa).

Residue 80 to 82 participates in substrate binding; the sequence is VES. 82–83 provides a ligand contact to NADPH; the sequence is SK. Cys180 functions as the Thioimide intermediate in the catalytic mechanism. Catalysis depends on Asp187, which acts as the Proton donor. 219–220 contributes to the substrate binding site; the sequence is HE. 248 to 249 lines the NADPH pocket; sequence RG.

The protein belongs to the GTP cyclohydrolase I family. QueF type 2 subfamily. In terms of assembly, homodimer.

The protein localises to the cytoplasm. The catalysed reaction is 7-aminomethyl-7-carbaguanine + 2 NADP(+) = 7-cyano-7-deazaguanine + 2 NADPH + 3 H(+). Its pathway is tRNA modification; tRNA-queuosine biosynthesis. Catalyzes the NADPH-dependent reduction of 7-cyano-7-deazaguanine (preQ0) to 7-aminomethyl-7-deazaguanine (preQ1). In Bordetella bronchiseptica (strain ATCC BAA-588 / NCTC 13252 / RB50) (Alcaligenes bronchisepticus), this protein is NADPH-dependent 7-cyano-7-deazaguanine reductase.